The sequence spans 122 residues: Small ribosomal subunit protein uS12 (122 aa).

It belongs to the universal ribosomal protein uS12 family. As to quaternary structure, part of the 30S ribosomal subunit. Contacts proteins S8 and S17. May interact with IF1 in the 30S initiation complex.

In terms of biological role, with S4 and S5 plays an important role in translational accuracy. Interacts with and stabilizes bases of the 16S rRNA that are involved in tRNA selection in the A site and with the mRNA backbone. Located at the interface of the 30S and 50S subunits, it traverses the body of the 30S subunit contacting proteins on the other side and probably holding the rRNA structure together. The combined cluster of proteins S8, S12 and S17 appears to hold together the shoulder and platform of the 30S subunit. The sequence is that of Small ribosomal subunit protein uS12 from Corynebacterium efficiens (strain DSM 44549 / YS-314 / AJ 12310 / JCM 11189 / NBRC 100395).